We begin with the raw amino-acid sequence, 473 residues long: Cell division protein FtsP (473 aa).

Positions M1–A27 form a signal peptide, tat-type signal.

The protein belongs to the FtsP family. Predicted to be exported by the Tat system. The position of the signal peptide cleavage has not been experimentally proven.

It is found in the periplasm. In terms of biological role, cell division protein that is required for growth during stress conditions. May be involved in protecting or stabilizing the divisomal assembly under conditions of stress. The protein is Cell division protein FtsP of Xenorhabdus nematophila (strain ATCC 19061 / DSM 3370 / CCUG 14189 / LMG 1036 / NCIMB 9965 / AN6).